The following is a 74-amino-acid chain: Cytochrome c oxidase assembly factor 5 (74 aa).

The CHCH domain occupies 27–65; sequence QSACVLQEGKSPRQCLKEGNCRALQYSFFECKRSMLDAR. Positions 30-41 match the Cx10C motif motif; that stretch reads CVLQEGKSPRQC. Disulfide bonds link Cys30–Cys57 and Cys41–Cys47. Ser37 carries the post-translational modification Phosphoserine. Positions 47 to 57 match the Cx9C motif motif; it reads CRALQYSFFEC.

The protein belongs to the PET191 family.

In terms of biological role, involved in an early step of the mitochondrial complex IV assembly process. This Mus musculus (Mouse) protein is Cytochrome c oxidase assembly factor 5 (Coa5).